The sequence spans 90 residues: Acylphosphatase (90 aa).

Residues 4 to 90 (TRRVRFYGRV…TEFQDFQIKR (87 aa)) form the Acylphosphatase-like domain. Catalysis depends on residues arginine 19 and asparagine 37.

The protein belongs to the acylphosphatase family.

The catalysed reaction is an acyl phosphate + H2O = a carboxylate + phosphate + H(+). The polypeptide is Acylphosphatase (acyP) (Thermoplasma volcanium (strain ATCC 51530 / DSM 4299 / JCM 9571 / NBRC 15438 / GSS1)).